The chain runs to 558 residues: Protein NRT1/ PTR FAMILY 2.7 (558 aa).

12 helical membrane-spanning segments follow: residues 31-51, 63-83, 90-110, 140-162, 178-198, 204-224, 319-339, 357-377, 399-419, 440-460, 479-499, and 518-538; these read FMIATLLGLTIAAWGWLLNLI, IAAAQIANIVSGCICMVPAVA, FFGTIPVISVSAFISLMGVAL, LGVLYTAITLASIGTGGTRFTLA, FFNWFFFTTYLAGAISATAIV, ISWTLGFGLSVAANFFSFLVF, IIPLALATIFLSTPIAMQLSL, IPAGSLQVITLLSTCLFIIVN, VGIGHAFNILSMAVTAIVEAK, VLWLFPPLVIVGIGEAFHFPG, SITSVVIGICFYTSTALIDLI, and VYWILVIGGVLNLGYFLVCSW.

Belongs to the major facilitator superfamily. Proton-dependent oligopeptide transporter (POT/PTR) (TC 2.A.17) family. Expressed in shoots and in the cortex of mature roots. Not expressed in root tip meristematic cells.

The protein resides in the cell membrane. Transporter involved in a passive nitrate efflux. Not competent for chloride transport. In Arabidopsis thaliana (Mouse-ear cress), this protein is Protein NRT1/ PTR FAMILY 2.7 (NPF2.7).